The chain runs to 339 residues: Phosphate acyltransferase (339 aa).

Belongs to the PlsX family. As to quaternary structure, homodimer. Probably interacts with PlsY.

The protein resides in the cytoplasm. The catalysed reaction is a fatty acyl-[ACP] + phosphate = an acyl phosphate + holo-[ACP]. It functions in the pathway lipid metabolism; phospholipid metabolism. Its function is as follows. Catalyzes the reversible formation of acyl-phosphate (acyl-PO(4)) from acyl-[acyl-carrier-protein] (acyl-ACP). This enzyme utilizes acyl-ACP as fatty acyl donor, but not acyl-CoA. In Vesicomyosocius okutanii subsp. Calyptogena okutanii (strain HA), this protein is Phosphate acyltransferase.